The chain runs to 329 residues: Phosphate acetyltransferase (329 aa).

Belongs to the phosphate acetyltransferase and butyryltransferase family.

The protein localises to the cytoplasm. The catalysed reaction is acetyl-CoA + phosphate = acetyl phosphate + CoA. The protein operates within metabolic intermediate biosynthesis; acetyl-CoA biosynthesis; acetyl-CoA from acetate: step 2/2. This Staphylococcus epidermidis (strain ATCC 35984 / DSM 28319 / BCRC 17069 / CCUG 31568 / BM 3577 / RP62A) protein is Phosphate acetyltransferase (pta).